Here is a 331-residue protein sequence, read N- to C-terminus: (+)-aristolochene synthase TS1 (331 aa).

The interval 1-22 (MTRMKNSSSNVTSASGSGSGSG) is disordered. The span at 7–16 (SSSNVTSASG) shows a compositional bias: low complexity. D102, N231, S235, and E239 together coordinate Mg(2+). The short motif at 102 to 106 (DDLLE) is the DDxx(x)D/E motif element. The NDxxSxxxD/E motif signature appears at 231–239 (NDVYSYEKE). Residues R326 and Y327 each coordinate (2E,6E)-farnesyl diphosphate.

Belongs to the terpene synthase family. As to quaternary structure, homodimer. Requires Mg(2+) as cofactor.

It carries out the reaction (2E,6E)-farnesyl diphosphate = (+)-aristolochene + diphosphate. Its pathway is sesquiterpene biosynthesis; aristolochene biosynthesis; aristolochene from farnesyl diphosphate: step 1/1. Functionally, catalyzes the cyclization of trans,trans-farnesyl diphosphate (FPP) to the bicyclic sesquiterpene aristolochene. Aristolochene is the likely parent compound for a number of sesquiterpenoid toxins produced by filamentous fungi. In Penicillium expansum (Blue mold rot fungus), this protein is (+)-aristolochene synthase TS1.